The sequence spans 264 residues: Apolipoprotein A-I (264 aa).

The signal sequence occupies residues 1-18 (MKAVVLAVALVFLTGSQA). 2 tandem repeats follow at residues 67 to 88 (LNLL…ERLG) and 89 to 110 (PLTR…QEMN). Positions 67–264 (LNLLENWDTL…DKARETLTAQ (198 aa)) are 10 X approximate tandem repeats. Residue M109 is modified to Methionine sulfoxide. The stretch at 111 to 121 (KDLEEVKQNVQ) is one 3; half-length repeat. 3 consecutive repeat copies span residues 122–143 (PYLD…QRVA), 144–165 (PLGA…GKLS), and 166–187 (PVAE…TQLA). A 7; truncated repeat occupies 188-207 (PHSDKLRESLAQRLAELKSN). Repeat unit 8 spans residues 208 to 229 (PTLNEYHTRAKTHLNTFGEKAR). The stretch at 230 to 240 (PALEDLRHTLI) is one 9; half-length repeat. Copy 10 of the repeat occupies 241-264 (PILDTLKTKVKSVIDKARETLTAQ).

Belongs to the apolipoprotein A1/A4/E family. Homodimer. Interacts with APOA1BP and CLU. Component of a sperm activating protein complex (SPAP), consisting of APOA1, an immunoglobulin heavy chain, an immunoglobulin light chain and albumin. Interacts with NDRG1. Interacts with SCGB3A2. Interacts with NAXE and YJEFN3. Post-translationally, glycosylated. Palmitoylated. In terms of processing, phosphorylation sites are present in the extracellular medium.

The protein localises to the secreted. In terms of biological role, participates in the reverse transport of cholesterol from tissues to the liver for excretion by promoting cholesterol efflux from tissues and by acting as a cofactor for the lecithin cholesterol acyltransferase (LCAT). As part of the SPAP complex, activates spermatozoa motility. This Mus pahari (Gairdner's shrew-mouse) protein is Apolipoprotein A-I (Apoa1).